A 433-amino-acid chain; its full sequence is 23S rRNA (uracil(1939)-C(5))-methyltransferase RlmD (433 aa).

The TRAM domain maps to 10–68 (RTTTRQIITVSVNDLDSFGQGVARHNGKTLFIPGLLSQENAEVTVTEDKKQYARAKVVR). Residues C81, C87, C90, and C162 each contribute to the [4Fe-4S] cluster site. Residues Q265, F294, N299, E315, N342, and D363 each coordinate S-adenosyl-L-methionine. The active-site Nucleophile is the C389.

The protein belongs to the class I-like SAM-binding methyltransferase superfamily. RNA M5U methyltransferase family. RlmD subfamily.

The enzyme catalyses uridine(1939) in 23S rRNA + S-adenosyl-L-methionine = 5-methyluridine(1939) in 23S rRNA + S-adenosyl-L-homocysteine + H(+). Functionally, catalyzes the formation of 5-methyl-uridine at position 1939 (m5U1939) in 23S rRNA. This chain is 23S rRNA (uracil(1939)-C(5))-methyltransferase RlmD, found in Shigella dysenteriae serotype 1 (strain Sd197).